Consider the following 651-residue polypeptide: Probable potassium transport system protein Kup 3 (651 aa).

12 helical membrane-spanning segments follow: residues 38–58, 77–97, 129–149, 166–186, 197–217, 242–262, 276–296, 314–334, 366–386, 396–416, 421–441, and 448–468; these read FWALTLGGIGVVFGDIGTSPL, VLVLGVLSLILWALLIVVTAK, LFLLVLGVIGASMFIGDSMIT, PALEHYVVPLTVLVLVLLFGV, FFGPVMLVWFATLAAMGAMHI, IGLVTLGAVFLAVTGGEALYA, WLGFVLPALLINYFGQGALVL, LVLPLTLMATAATVIASQAVI, IYLPRVNALLLIGVLLLVLLF, YGIAVSTTMVVDGIMGFVVIW, WSWPAAALVILPLVLVDAMFF, and LLDGAWVPLLFGLAMAVVIWT.

Belongs to the HAK/KUP transporter (TC 2.A.72) family.

It localises to the cell inner membrane. The catalysed reaction is K(+)(in) + H(+)(in) = K(+)(out) + H(+)(out). Transport of potassium into the cell. Likely operates as a K(+):H(+) symporter. The sequence is that of Probable potassium transport system protein Kup 3 from Rhodopseudomonas palustris (strain ATCC BAA-98 / CGA009).